The sequence spans 175 residues: Riboflavin kinase (175 aa).

A CDP-binding site is contributed by 54-59; it reads GLGEGK. 2 residues coordinate Mg(2+): threonine 83 and asparagine 85. Positions 142 and 150 each coordinate FMN. Position 155–158 (155–158) interacts with CDP; it reads FHLR.

This sequence belongs to the archaeal riboflavin kinase family. Requires Mg(2+) as cofactor.

The catalysed reaction is riboflavin + CTP = CDP + FMN + H(+). Its pathway is cofactor biosynthesis; FMN biosynthesis; FMN from riboflavin (CTP route): step 1/1. Catalyzes the CTP-dependent phosphorylation of riboflavin (vitamin B2) to form flavin mononucleotide (FMN). This is Riboflavin kinase from Saccharolobus solfataricus (strain ATCC 35092 / DSM 1617 / JCM 11322 / P2) (Sulfolobus solfataricus).